We begin with the raw amino-acid sequence, 104 residues long: MKGNMNNMMKQMQKMQKKMMQAQDELHEMTFEATAGGGMVTVKASGKKEIIDVEIKEEVVDPDDIDMLQDLILAATNDVLNQIDEKTNDTMGQFTKGMNMPGMF.

Residues 1-23 (MKGNMNNMMKQMQKMQKKMMQAQ) form a disordered region.

This sequence belongs to the YbaB/EbfC family. In terms of assembly, homodimer.

It localises to the cytoplasm. Its subcellular location is the nucleoid. In terms of biological role, binds to DNA and alters its conformation. May be involved in regulation of gene expression, nucleoid organization and DNA protection. The sequence is that of Nucleoid-associated protein OB0030 from Oceanobacillus iheyensis (strain DSM 14371 / CIP 107618 / JCM 11309 / KCTC 3954 / HTE831).